The sequence spans 947 residues: Bifunctional glutamine synthetase adenylyltransferase/adenylyl-removing enzyme (947 aa).

The interval Met-1 to Glu-440 is adenylyl removase. The tract at residues Ser-450–Val-947 is adenylyl transferase.

Belongs to the GlnE family. Mg(2+) is required as a cofactor.

The catalysed reaction is [glutamine synthetase]-O(4)-(5'-adenylyl)-L-tyrosine + phosphate = [glutamine synthetase]-L-tyrosine + ADP. It carries out the reaction [glutamine synthetase]-L-tyrosine + ATP = [glutamine synthetase]-O(4)-(5'-adenylyl)-L-tyrosine + diphosphate. In terms of biological role, involved in the regulation of glutamine synthetase GlnA, a key enzyme in the process to assimilate ammonia. When cellular nitrogen levels are high, the C-terminal adenylyl transferase (AT) inactivates GlnA by covalent transfer of an adenylyl group from ATP to specific tyrosine residue of GlnA, thus reducing its activity. Conversely, when nitrogen levels are low, the N-terminal adenylyl removase (AR) activates GlnA by removing the adenylyl group by phosphorolysis, increasing its activity. The regulatory region of GlnE binds the signal transduction protein PII (GlnB) which indicates the nitrogen status of the cell. The sequence is that of Bifunctional glutamine synthetase adenylyltransferase/adenylyl-removing enzyme from Salmonella gallinarum (strain 287/91 / NCTC 13346).